The sequence spans 29 residues: Cyclotide mden-F (29 aa).

Residues 1–29 constitute a cross-link (cyclopeptide (Gly-Asn)); it reads GLPICGETCFFGKCNTPKCTCINPICYKN. 3 cysteine pairs are disulfide-bonded: Cys5/Cys19, Cys9/Cys21, and Cys14/Cys26.

The protein belongs to the cyclotide family. This is a cyclic peptide.

Probably participates in a plant defense mechanism. The protein is Cyclotide mden-F of Melicytus dentatus (Tree violet).